Consider the following 854-residue polypeptide: N-terminal acetyltransferase A complex subunit NAT1 (854 aa).

S2 is modified (N-acetylserine). TPR repeat units follow at residues 20-53 (ENDQFLEALKLYEGKQYKKSLKLLDAILKKDGSH), 54-87 (VDSLALKGLDLYSVGEKDDAASYVANAIRKIEGA), 91-124 (PICCHVLGIYMRNTKEYKESIKWFTAALNNGSTN), 126-162 (QIYRDLATLQSQIGDFKNALVSRKKYWEAFLGYRANW), 241-274 (FGLLERKATIYMKLGQLKDASIVYRTLIKRNPDN), 384-417 (IWTNYYLSQHFLFLKDFPKAQEYIDAALDHTPTL), and 452-485 (RFINCKTVKYFLRANNIDKAVEVASLFTKNDDSV). Residues 623-667 (LKRKSDSLDENSDEIQNNGQNSSSQKKKAKKEAAAMNKRKETEAK) adopt a coiled-coil conformation. The disordered stretch occupies residues 626–668 (KSDSLDENSDEIQNNGQNSSSQKKKAKKEAAAMNKRKETEAKS). S674 is modified (phosphoserine). A TPR 8 repeat occupies 728 to 761 (ALCFASLNKFAKRFGTTSGLFGSMAIVLLHATRN).

Component of the N-terminal acetyltransferase A (NatA) complex, which is composed of ARD1, NAT1 and NAT5. Can self-associate. NAT1 associates with the nascent polypeptide chain and the ribosome. The N-terminus is blocked.

The protein localises to the cytoplasm. Functionally, non-catalytic component of the NatA N-terminal acetyltransferase, which catalyzes acetylation of proteins beginning with Met-Ser, Met-Gly and Met-Ala. N-acetylation plays a role in normal eukaryotic translation and processing, protect against proteolytic degradation and protein turnover. NAT1 anchors ARD1 and NAT5 to the ribosome and may present the N termini of nascent polypeptides for acetylation. The sequence is that of N-terminal acetyltransferase A complex subunit NAT1 (NAT1) from Saccharomyces cerevisiae (strain ATCC 204508 / S288c) (Baker's yeast).